The chain runs to 333 residues: tRNA N6-adenosine threonylcarbamoyltransferase (333 aa).

Fe cation is bound by residues histidine 111 and histidine 115. Residues 134-138, aspartate 167, glycine 180, and asparagine 273 each bind substrate; that span reads LASGG. Aspartate 301 contributes to the Fe cation binding site.

This sequence belongs to the KAE1 / TsaD family. Fe(2+) serves as cofactor.

Its subcellular location is the cytoplasm. The catalysed reaction is L-threonylcarbamoyladenylate + adenosine(37) in tRNA = N(6)-L-threonylcarbamoyladenosine(37) in tRNA + AMP + H(+). Required for the formation of a threonylcarbamoyl group on adenosine at position 37 (t(6)A37) in tRNAs that read codons beginning with adenine. Is involved in the transfer of the threonylcarbamoyl moiety of threonylcarbamoyl-AMP (TC-AMP) to the N6 group of A37, together with TsaE and TsaB. TsaD likely plays a direct catalytic role in this reaction. The protein is tRNA N6-adenosine threonylcarbamoyltransferase of Desulforapulum autotrophicum (strain ATCC 43914 / DSM 3382 / VKM B-1955 / HRM2) (Desulfobacterium autotrophicum).